The chain runs to 698 residues: Endogenous retrovirus group K member 21 Env polyprotein (698 aa).

A disordered region spans residues 1–25; the sequence is MHPSEMQRKAPPRRRRHRNRAPLTH. A signal peptide spans 1 to 88; sequence MHPSEMQRKA…ALMIVSMVVS (88 aa). A compositionally biased stretch (basic residues) spans 10-20; the sequence is APPRRRRHRNR. Over 89 to 631 the chain is Extracellular; sequence LPMPAGAAAA…NLNPVTWVKT (543 aa). N-linked (GlcNAc...) asparagine glycans are attached at residues Asn99, Asn127, Asn152, Asn273, Asn354, Asn371, and Asn460. A fusion peptide region spans residues 465–485; it reads FIFTLIAVIMGLIAVTAMAAV. Residues Asn506, Asn553, Asn565, and Asn584 are each glycosylated (N-linked (GlcNAc...) asparagine). A helical membrane pass occupies residues 632–652; it reads IGSTTIINLILILVCLFCLLL. The Cytoplasmic portion of the chain corresponds to 653 to 698; the sequence is VCRCTQQLRRDSDHRERAMMTMVVLSKRKGGNVGKSKRDQIVTVSV.

Belongs to the beta type-B retroviral envelope protein family. HERV class-II K(HML-2) env subfamily. As to quaternary structure, the surface (SU) and transmembrane (TM) proteins form a heterodimer. SU and TM are attached by noncovalent interactions or by a labile interchain disulfide bond. Specific enzymatic cleavages in vivo yield the mature SU and TM proteins.

Its subcellular location is the cell membrane. The protein localises to the virion. Functionally, retroviral envelope proteins mediate receptor recognition and membrane fusion during early infection. Endogenous envelope proteins may have kept, lost or modified their original function during evolution. This endogenous envelope protein has lost its original fusogenic properties. Its function is as follows. SU mediates receptor recognition. In terms of biological role, TM anchors the envelope heterodimer to the viral membrane through one transmembrane domain. The other hydrophobic domain, called fusion peptide, mediates fusion of the viral membrane with the target cell membrane. The protein is Endogenous retrovirus group K member 21 Env polyprotein (ERVK-21) of Homo sapiens (Human).